A 594-amino-acid polypeptide reads, in one-letter code: Arginine--tRNA ligase (594 aa).

The 'HIGH' region motif lies at 133–143; it reads ANPTGPMNIVS.

Belongs to the class-I aminoacyl-tRNA synthetase family. Monomer.

It is found in the cytoplasm. The catalysed reaction is tRNA(Arg) + L-arginine + ATP = L-arginyl-tRNA(Arg) + AMP + diphosphate. The protein is Arginine--tRNA ligase of Leptospira biflexa serovar Patoc (strain Patoc 1 / Ames).